The chain runs to 208 residues: Uracil phosphoribosyltransferase (208 aa).

Residues arginine 78, arginine 103, and 130–138 (DPMLATGGS) each bind 5-phospho-alpha-D-ribose 1-diphosphate. Uracil is bound by residues isoleucine 193 and 198–200 (GDA). Aspartate 199 contacts 5-phospho-alpha-D-ribose 1-diphosphate.

Belongs to the UPRTase family. Mg(2+) serves as cofactor.

The enzyme catalyses UMP + diphosphate = 5-phospho-alpha-D-ribose 1-diphosphate + uracil. It participates in pyrimidine metabolism; UMP biosynthesis via salvage pathway; UMP from uracil: step 1/1. Its activity is regulated as follows. Allosterically activated by GTP. Functionally, catalyzes the conversion of uracil and 5-phospho-alpha-D-ribose 1-diphosphate (PRPP) to UMP and diphosphate. The polypeptide is Uracil phosphoribosyltransferase (Pelobacter propionicus (strain DSM 2379 / NBRC 103807 / OttBd1)).